The sequence spans 167 residues: Probable phospholipid hydroperoxide glutathione peroxidase (167 aa).

C41 is a catalytic residue.

It belongs to the glutathione peroxidase family.

It localises to the cytoplasm. It carries out the reaction a hydroperoxy polyunsaturated fatty acid + 2 glutathione = a hydroxy polyunsaturated fatty acid + glutathione disulfide + H2O. Its function is as follows. Protects cells and enzymes from oxidative damage, by catalyzing the reduction of hydrogen peroxide, lipid peroxides and organic hydroperoxide, by glutathione. The polypeptide is Probable phospholipid hydroperoxide glutathione peroxidase (CSA) (Citrus sinensis (Sweet orange)).